The chain runs to 175 residues: MSIVKVRNIFLIGPMGAGKSTIGRALAKELKLEFYDSDEVIEERAGADISWIFDIEGEEGFRRREQKVIDELTQKTNIVLATGGGVVITPENRNALAGRGTVIYLKTSLQQQFERTKRDTKRPLLQTEDLEGRLESLRDEREPFYDELADVSFETDKLTVKAVANNIIKYLYGEV.

Gly-16 to Thr-21 is an ATP binding site. Ser-20 lines the Mg(2+) pocket. Substrate-binding residues include Asp-38, Arg-62, and Gly-84. Arg-122 is an ATP binding site. Arg-141 contributes to the substrate binding site.

This sequence belongs to the shikimate kinase family. In terms of assembly, monomer. It depends on Mg(2+) as a cofactor.

The protein localises to the cytoplasm. It catalyses the reaction shikimate + ATP = 3-phosphoshikimate + ADP + H(+). It functions in the pathway metabolic intermediate biosynthesis; chorismate biosynthesis; chorismate from D-erythrose 4-phosphate and phosphoenolpyruvate: step 5/7. Its function is as follows. Catalyzes the specific phosphorylation of the 3-hydroxyl group of shikimic acid using ATP as a cosubstrate. The chain is Shikimate kinase from Legionella pneumophila (strain Paris).